The sequence spans 256 residues: Pimeloyl-[acyl-carrier protein] methyl ester esterase (256 aa).

The region spanning 15-242 (HLVLLHGWGL…AAHAPFISHP (228 aa)) is the AB hydrolase-1 domain. Substrate-binding positions include Trp-22, 82–83 (SL), and 143–147 (FLALQ). Residue Ser-82 is the Nucleophile of the active site. Catalysis depends on residues Asp-207 and His-235. Residue His-235 participates in substrate binding.

The protein belongs to the AB hydrolase superfamily. Carboxylesterase BioH family. Monomer.

The protein localises to the cytoplasm. It carries out the reaction 6-carboxyhexanoyl-[ACP] methyl ester + H2O = 6-carboxyhexanoyl-[ACP] + methanol + H(+). The protein operates within cofactor biosynthesis; biotin biosynthesis. In terms of biological role, the physiological role of BioH is to remove the methyl group introduced by BioC when the pimeloyl moiety is complete. It allows to synthesize pimeloyl-ACP via the fatty acid synthetic pathway through the hydrolysis of the ester bonds of pimeloyl-ACP esters. This is Pimeloyl-[acyl-carrier protein] methyl ester esterase from Shigella boydii serotype 18 (strain CDC 3083-94 / BS512).